Reading from the N-terminus, the 983-residue chain is Probable beta-galactosidase C (983 aa).

The signal sequence occupies residues 1–23; sequence MRIFSFLFLLLLGILTGQGLVSG. Positions 82, 127, 128, 129, and 187 each coordinate substrate. Glu-188 functions as the Proton donor in the catalytic mechanism. Residue Asn-197 is glycosylated (N-linked (GlcNAc...) asparagine). Tyr-251 lines the substrate pocket. Cys-257 and Cys-304 are joined by a disulfide. Asn-276 is a glycosylation site (N-linked (GlcNAc...) asparagine). Glu-287 serves as the catalytic Nucleophile. Substrate is bound at residue Tyr-353. Asn-391, Asn-434, Asn-466, Asn-516, Asn-601, Asn-676, Asn-714, Asn-719, and Asn-804 each carry an N-linked (GlcNAc...) asparagine glycan.

It belongs to the glycosyl hydrolase 35 family.

It is found in the secreted. It catalyses the reaction Hydrolysis of terminal non-reducing beta-D-galactose residues in beta-D-galactosides.. In terms of biological role, cleaves beta-linked terminal galactosyl residues from gangliosides, glycoproteins, and glycosaminoglycans. The chain is Probable beta-galactosidase C (lacC) from Neosartorya fischeri (strain ATCC 1020 / DSM 3700 / CBS 544.65 / FGSC A1164 / JCM 1740 / NRRL 181 / WB 181) (Aspergillus fischerianus).